We begin with the raw amino-acid sequence, 475 residues long: ATP synthase subunit beta 1 (475 aa).

ATP is bound at residue glycine 152–threonine 159.

This sequence belongs to the ATPase alpha/beta chains family. F-type ATPases have 2 components, CF(1) - the catalytic core - and CF(0) - the membrane proton channel. CF(1) has five subunits: alpha(3), beta(3), gamma(1), delta(1), epsilon(1). CF(0) has four main subunits: a(1), b(1), b'(1) and c(9-12).

It is found in the cell inner membrane. It carries out the reaction ATP + H2O + 4 H(+)(in) = ADP + phosphate + 5 H(+)(out). Functionally, produces ATP from ADP in the presence of a proton gradient across the membrane. The catalytic sites are hosted primarily by the beta subunits. This chain is ATP synthase subunit beta 1, found in Cereibacter sphaeroides (strain ATCC 17029 / ATH 2.4.9) (Rhodobacter sphaeroides).